A 368-amino-acid polypeptide reads, in one-letter code: MFMKSIVEEALARAEREKKERIEGRGFEDVEDEILQVLHELKTVIKVIGVGGGGCNTITRMYEEGIEGAELIALNTDVQHLYYTKANRRILIGKRRTRGLGAGSLPQVGEEAARESEDEIKKLVEGSDMVFVTCGLGGGTGTGAAPVVAEAAQEAGALTIAVVTFPFSAEGAVRRANAEAGLERLREVADTVIVIPNDRLLEVVPNYPMQLAFKVADEILMRAVKGITELITKPALINLDFADVRTVMEKGGVAMIGLGEASGEDKAAESVRKALKSPLLDVDVSGAKAALVNVTGGPDMTIEEAESVIEEIYSKVDPDARIIWGAMIDPELENTMRTLIIVTGVKSPQILGRKGYPVTRKYGIDFVR.

Residues 52–56 (GGGCN), 139–141 (GTG), E170, R174, and D217 contribute to the GTP site.

This sequence belongs to the FtsZ family. In terms of assembly, homodimer. Polymerizes to form a dynamic ring structure in a strictly GTP-dependent manner. Interacts directly with several other division proteins.

The protein localises to the cytoplasm. Functionally, essential cell division protein that forms a contractile ring structure (Z ring) at the future cell division site. The regulation of the ring assembly controls the timing and the location of cell division. One of the functions of the FtsZ ring is to recruit other cell division proteins to the septum to produce a new cell wall between the dividing cells. Binds GTP and shows GTPase activity. The protein is Cell division protein FtsZ 1 of Archaeoglobus fulgidus (strain ATCC 49558 / DSM 4304 / JCM 9628 / NBRC 100126 / VC-16).